Consider the following 1230-residue polypeptide: ATP-dependent helicase/nuclease subunit A (1230 aa).

Residues 9–480 enclose the UvrD-like helicase ATP-binding domain; sequence STWTDDQWKA…IDLNKNFRSR (472 aa). 30–37 is a binding site for ATP; the sequence is AAAGSGKT. One can recognise a UvrD-like helicase C-terminal domain in the interval 507–796; the sequence is QAELKLGASY…RLMTIHSSKG (290 aa).

The protein belongs to the helicase family. AddA subfamily. Heterodimer of AddA and AddB/RexB. Requires Mg(2+) as cofactor.

The catalysed reaction is Couples ATP hydrolysis with the unwinding of duplex DNA by translocating in the 3'-5' direction.. It catalyses the reaction ATP + H2O = ADP + phosphate + H(+). Functionally, the heterodimer acts as both an ATP-dependent DNA helicase and an ATP-dependent, dual-direction single-stranded exonuclease. Recognizes the chi site generating a DNA molecule suitable for the initiation of homologous recombination. The AddA nuclease domain is required for chi fragment generation; this subunit has the helicase and 3' -&gt; 5' nuclease activities. The chain is ATP-dependent helicase/nuclease subunit A from Bacillus licheniformis (strain ATCC 14580 / DSM 13 / JCM 2505 / CCUG 7422 / NBRC 12200 / NCIMB 9375 / NCTC 10341 / NRRL NRS-1264 / Gibson 46).